The sequence spans 65 residues: Subtilisin inhibitor CLSI-I (65 aa).

The protein belongs to the protease inhibitor I13 (potato type I serine protease inhibitor) family.

Its function is as follows. Inhibits subtilisin-type microbial serine proteases including proteinase K, subtilisin BPN', subtilisin Carlsberg, subtilisin E, A.oryzae protease and S.griseus alkaline protease. Weakly inhibits pronase E. Does not inhibit trypsin or chymotrypsin. This is Subtilisin inhibitor CLSI-I from Canavalia lineata (Beach bean).